The following is a 520-amino-acid chain: Keratin, type II cytoskeletal 72 (520 aa).

The head stretch occupies residues 1-133 (MSRQLTLYPG…DPEIQKVRAQ (133 aa)). The coil 1A stretch occupies residues 134 to 169 (EREQIKALNNKFASFIDKVRFLEQQNQVLETKWELL). An IF rod domain is found at 134–447 (EREQIKALNN…KLLESEESRM (314 aa)). Residues 170–188 (QQLDQNNSRRSLEPVHESY) form a linker 1 region. Positions 189–280 (ISNLQKQLEI…VLFEGEIAQM (92 aa)) are coil 1B. The interval 281–304 (QSHISDTSVILSMDNNRQLDLDSI) is linker 12. Residues 305–443 (LAEVRAQYEE…ATYRKLLESE (139 aa)) form a coil 2 region. Residues 444–520 (ESRMAGEYPS…SSCVSKKASR (77 aa)) are tail. The tract at residues 495 to 520 (GSCGSELKDPPAKTSASSCVSKKASR) is disordered.

It belongs to the intermediate filament family. Heterotetramer of two type I and two type II keratins.

Has a role in hair formation. Specific component of keratin intermediate filaments in the inner root sheath (IRS) of the hair follicle. The polypeptide is Keratin, type II cytoskeletal 72 (Krt72) (Rattus norvegicus (Rat)).